The sequence spans 545 residues: Pentatricopeptide repeat-containing protein At4g18840 (545 aa).

PPR repeat units follow at residues 104–138 (NGFT…PVFP), 139–173 (DKYS…GLVT), 174–204 (DVFV…MPVR), 205–239 (DAVS…NVES), 240–266 (WNFM…MPVR), 267–301 (DVVS…STEK), 303–337 (DGFT…GIEI), 338–368 (EGFL…TSKR), 369–403 (DVST…GFKP), 404–434 (NGIT…MSSV), and 440–474 (TIEH…EASI). A type E motif region spans residues 475–545 (LLESLLGACK…ERVNRSLDVA (71 aa)).

Belongs to the PPR family. PCMP-E subfamily.

The sequence is that of Pentatricopeptide repeat-containing protein At4g18840 (PCMP-E101) from Arabidopsis thaliana (Mouse-ear cress).